The following is a 405-amino-acid chain: Potassium channel subfamily K member 13 (405 aa).

The Cytoplasmic segment spans residues 1-19 (MAGRGCSCSPGHLNEDNAR). The chain crosses the membrane as a helical span at residues 20–40 (FLLLAGLILLYLLGGAAVFSA). N-linked (GlcNAc...) asparagine glycosylation is found at Asn59 and Asn65. The pore-forming intramembrane region spans 95 to 115 (WDFTGAFYFVGTVVTTIGFGM). Residues Thr110, Ile111, and Gly112 each coordinate K(+). A selectivity filter 1 region spans residues 110 to 115 (TIGFGM). The chain crosses the membrane as a helical span at residues 125–145 (VFLIFYGLIGCASTILFFNLF). Over 146-193 (LERLITVIAYVMRTCHHQQLRRRGTVARDNRKAPRKGEADSLAGWKPS) the chain is Cytoplasmic. The helical transmembrane segment at 194 to 214 (VYYVMLILCLASVAISCGASA) threads the bilayer. The pore-forming intramembrane region spans 224–244 (YFDSVYFCFVASSTIGFGDLV). Positions 237, 238, 239, and 240 each coordinate K(+). The tract at residues 237 to 242 (TIGFGD) is selectivity filter 2. The chain crosses the membrane as a helical span at residues 263–283 (FFILMGVCCIYSMFNVISILI). Residues 284 to 405 (KQTVNWILRK…NRLAETSGDR (122 aa)) lie on the Cytoplasmic side of the membrane.

This sequence belongs to the two pore domain potassium channel (TC 1.A.1.8) family. As to quaternary structure, homodimer. Heterodimer with KCNK12. In terms of tissue distribution, ubiquitous. In brain expression is rather low and restricted to the olfactory bulb and tubercle, to the ventromedial hypothalamic nucleus, lateral septal nucleus dorsal, lateral mammillary nucleus, lateral parabrachial nuclei, reticular nucleus and reunions nuclei.

Its subcellular location is the cell membrane. The catalysed reaction is K(+)(in) = K(+)(out). With respect to regulation, the channel currents are activated by arachidonic acid, inhibited by volatile anesthetic halothane, partially inhibited by Ba(2+) ions and only weakly inhibited by extracellular acidification to pH 6. K(+) channel that conducts outward rectifying tonic currents potentiated by purinergic signals. Homo- and heterodimerizes to form functional channels with distinct regulatory and gating properties. Contributes most of K(+) currents at the plasma membrane of resting microglia. Maintains a depolarized membrane potential required for proper ramified microglia morphology and phagocytosis, selectively mediating microglial pruning of presynaptic compartments at hippocampal excitatory synapses. Upon local release of ATP caused by neuronal injury or infection, it is potentiated by P2RY12 and P2RX7 receptor signaling and contributes to ATP-triggered K(+) efflux underlying microglial NLRP3 inflammasome assembly and IL1B release. In Rattus norvegicus (Rat), this protein is Potassium channel subfamily K member 13.